The following is an 874-amino-acid chain: Alanine--tRNA ligase (874 aa).

Histidine 563, histidine 567, cysteine 665, and histidine 669 together coordinate Zn(2+).

Belongs to the class-II aminoacyl-tRNA synthetase family. The cofactor is Zn(2+).

It localises to the cytoplasm. The enzyme catalyses tRNA(Ala) + L-alanine + ATP = L-alanyl-tRNA(Ala) + AMP + diphosphate. In terms of biological role, catalyzes the attachment of alanine to tRNA(Ala) in a two-step reaction: alanine is first activated by ATP to form Ala-AMP and then transferred to the acceptor end of tRNA(Ala). Also edits incorrectly charged Ser-tRNA(Ala) and Gly-tRNA(Ala) via its editing domain. The protein is Alanine--tRNA ligase of Actinobacillus succinogenes (strain ATCC 55618 / DSM 22257 / CCUG 43843 / 130Z).